We begin with the raw amino-acid sequence, 334 residues long: Ornithine carbamoyltransferase (334 aa).

Carbamoyl phosphate is bound by residues 57–60, Q84, R108, and 135–138; these read STRT and HPTQ. Residues N169, D233, and 237 to 238 each bind L-ornithine; that span reads SM. Residues 275 to 276 and R320 contribute to the carbamoyl phosphate site; that span reads CL.

Belongs to the aspartate/ornithine carbamoyltransferase superfamily. OTCase family.

It is found in the cytoplasm. It catalyses the reaction carbamoyl phosphate + L-ornithine = L-citrulline + phosphate + H(+). The protein operates within amino-acid biosynthesis; L-arginine biosynthesis; L-arginine from L-ornithine and carbamoyl phosphate: step 1/3. In terms of biological role, reversibly catalyzes the transfer of the carbamoyl group from carbamoyl phosphate (CP) to the N(epsilon) atom of ornithine (ORN) to produce L-citrulline. The sequence is that of Ornithine carbamoyltransferase (argF) from Pasteurella multocida (strain Pm70).